The following is an 850-amino-acid chain: Envelope glycoprotein gp160 (850 aa).

The N-terminal stretch at 1 to 31 (MRVREMQRNWQHLGRWGLLFLGILIICSAAD) is a signal peptide. Topologically, residues 32–678 (KLWVTVYYGV…ITRWLWYIEI (647 aa)) are extracellular. Cys-53 and Cys-73 are joined by a disulfide. Asn-87, Asn-129, Asn-136, Asn-141, Asn-142, Asn-148, Asn-157, Asn-161, Asn-186, Asn-189, Asn-198, Asn-231, Asn-235, Asn-242, Asn-263, Asn-277, Asn-296, Asn-302, Asn-332, and Asn-354 each carry an N-linked (GlcNAc...) asparagine; by host glycan. 5 disulfide bridges follow: Cys-118–Cys-206, Cys-125–Cys-197, Cys-130–Cys-158, Cys-219–Cys-248, and Cys-229–Cys-240. Residues 130-157 (CTKAIINVTSSNNTTLAPNVTISEEMKN) form a V1 region. Residues 158-197 (CSFNITTEIRDKQKKEYALFYKLDVVQINNSNTSYRLINC) are V2. The V3 stretch occupies residues 297–330 (CTRPNNNTRRSIHIGPGRAFYATGEIIGDTRKAH). Cys-297 and Cys-331 are disulfide-bonded. Positions 362 to 372 (SAGGDLEITTH) are CD4-binding loop. 2 disulfide bridges follow: Cys-376/Cys-440 and Cys-383/Cys-413. The V4 stretch occupies residues 383–413 (CNTTILFNHTRVNDILSNNHTRENDTITLPC). 6 N-linked (GlcNAc...) asparagine; by host glycosylation sites follow: Asn-384, Asn-390, Asn-401, Asn-406, Asn-443, and Asn-457. 2 V5 regions span residues 456 to 465 (GNESETLRPG) and 458 to 465 (ESETLRPG). Positions 506 to 526 (AVGMGAMFLGFLGAAGSTMGA) are fusion peptide. Residues 568 to 586 (KQLQARILAVERYLKDQQL) form an immunosuppression region. Cys-592 and Cys-598 are disulfide-bonded. N-linked (GlcNAc...) asparagine; by host glycosylation is found at Asn-605, Asn-610, Asn-619, and Asn-631. The stretch at 627–661 (KEIGNYTDTIYRLIESAQNQQEKNEQDLLALDKWD) forms a coiled coil. An MPER; binding to GalCer region spans residues 656–677 (ALDKWDNLWNWFSITRWLWYIE). Residues 679-699 (FIMIIGSLIGLRIVFTVLSII) form a helical membrane-spanning segment. Topologically, residues 700–850 (NRVRQGYSPL…IRQGLERALL (151 aa)) are cytoplasmic. The YXXL motif; contains endocytosis signal signature appears at 706–709 (YSPL). The interval 716 to 736 (PNSRGPERPGGIEEEGGEQDK) is disordered. Cys-758 carries S-palmitoyl cysteine; by host lipidation. The short motif at 849-850 (LL) is the Di-leucine internalization motif element.

Belongs to the HIV-1 env protein family. As to quaternary structure, the mature envelope protein (Env) consists of a homotrimer of non-covalently associated gp120-gp41 heterodimers. The resulting complex protrudes from the virus surface as a spike. There seems to be as few as 10 spikes on the average virion. Interacts with host CD4, CCR5 and CXCR4. Gp120 also interacts with the C-type lectins CD209/DC-SIGN and CLEC4M/DC-SIGNR (collectively referred to as DC-SIGN(R)). Gp120 and gp41 interact with GalCer. Gp120 interacts with host ITGA4/ITGB7 complex; on CD4+ T-cells, this interaction results in rapid activation of integrin ITGAL/LFA-1, which facilitates efficient cell-to-cell spreading of HIV-1. Gp120 interacts with cell-associated heparan sulfate; this interaction increases virus infectivity on permissive cells and may be involved in infection of CD4- cells. In terms of assembly, the mature envelope protein (Env) consists of a homotrimer of non-covalently associated gp120-gp41 heterodimers. The resulting complex protrudes from the virus surface as a spike. There seems to be as few as 10 spikes on the average virion. Post-translationally, highly glycosylated by host. The high number of glycan on the protein is reffered to as 'glycan shield' because it contributes to hide protein sequence from adaptive immune system. Palmitoylation of the transmembrane protein and of Env polyprotein (prior to its proteolytic cleavage) is essential for their association with host cell membrane lipid rafts. Palmitoylation is therefore required for envelope trafficking to classical lipid rafts, but not for viral replication. In terms of processing, specific enzymatic cleavages in vivo yield mature proteins. Envelope glycoproteins are synthesized as an inactive precursor that is heavily N-glycosylated and processed likely by host cell furin in the Golgi to yield the mature SU and TM proteins. The cleavage site between SU and TM requires the minimal sequence [KR]-X-[KR]-R. About 2 of the 9 disulfide bonds of gp41 are reduced by P4HB/PDI, following binding to CD4 receptor.

The protein resides in the virion membrane. It localises to the host cell membrane. The protein localises to the host endosome membrane. Functionally, oligomerizes in the host endoplasmic reticulum into predominantly trimers. In a second time, gp160 transits in the host Golgi, where glycosylation is completed. The precursor is then proteolytically cleaved in the trans-Golgi and thereby activated by cellular furin or furin-like proteases to produce gp120 and gp41. In terms of biological role, attaches the virus to the host lymphoid cell by binding to the primary receptor CD4. This interaction induces a structural rearrangement creating a high affinity binding site for a chemokine coreceptor like CXCR4 and/or CCR5. Acts as a ligand for CD209/DC-SIGN and CLEC4M/DC-SIGNR, which are respectively found on dendritic cells (DCs), and on endothelial cells of liver sinusoids and lymph node sinuses. These interactions allow capture of viral particles at mucosal surfaces by these cells and subsequent transmission to permissive cells. HIV subverts the migration properties of dendritic cells to gain access to CD4+ T-cells in lymph nodes. Virus transmission to permissive T-cells occurs either in trans (without DCs infection, through viral capture and transmission), or in cis (following DCs productive infection, through the usual CD4-gp120 interaction), thereby inducing a robust infection. In trans infection, bound virions remain infectious over days and it is proposed that they are not degraded, but protected in non-lysosomal acidic organelles within the DCs close to the cell membrane thus contributing to the viral infectious potential during DCs' migration from the periphery to the lymphoid tissues. On arrival at lymphoid tissues, intact virions recycle back to DCs' cell surface allowing virus transmission to CD4+ T-cells. Its function is as follows. Acts as a class I viral fusion protein. Under the current model, the protein has at least 3 conformational states: pre-fusion native state, pre-hairpin intermediate state, and post-fusion hairpin state. During fusion of viral and target intracellular membranes, the coiled coil regions (heptad repeats) assume a trimer-of-hairpins structure, positioning the fusion peptide in close proximity to the C-terminal region of the ectodomain. The formation of this structure appears to drive apposition and subsequent fusion of viral and target cell membranes. Complete fusion occurs in host cell endosomes and is dynamin-dependent, however some lipid transfer might occur at the plasma membrane. The virus undergoes clathrin-dependent internalization long before endosomal fusion, thus minimizing the surface exposure of conserved viral epitopes during fusion and reducing the efficacy of inhibitors targeting these epitopes. Membranes fusion leads to delivery of the nucleocapsid into the cytoplasm. This Human immunodeficiency virus type 1 group M subtype F2 (isolate MP257) (HIV-1) protein is Envelope glycoprotein gp160.